A 131-amino-acid polypeptide reads, in one-letter code: Small ribosomal subunit protein eS8 (131 aa).

The disordered stretch occupies residues 15-36 (PSGGKKGRVRKTKKKALGGGPP). The segment covering 17–30 (GGKKGRVRKTKKKA) has biased composition (basic residues).

Belongs to the eukaryotic ribosomal protein eS8 family. Part of the 30S ribosomal subunit.

The chain is Small ribosomal subunit protein eS8 from Pyrobaculum calidifontis (strain DSM 21063 / JCM 11548 / VA1).